We begin with the raw amino-acid sequence, 446 residues long: Exodeoxyribonuclease 7 large subunit (446 aa).

Belongs to the XseA family. In terms of assembly, heterooligomer composed of large and small subunits.

Its subcellular location is the cytoplasm. It carries out the reaction Exonucleolytic cleavage in either 5'- to 3'- or 3'- to 5'-direction to yield nucleoside 5'-phosphates.. In terms of biological role, bidirectionally degrades single-stranded DNA into large acid-insoluble oligonucleotides, which are then degraded further into small acid-soluble oligonucleotides. This is Exodeoxyribonuclease 7 large subunit from Streptococcus pneumoniae serotype 19F (strain G54).